A 173-amino-acid chain; its full sequence is Globin-like host-protective antigen (173 aa).

The first 15 residues, 1–15, serve as a signal peptide directing secretion; sequence MRFLLLAAFVAYAYA. One can recognise a Globin domain in the interval 25–166; the sequence is ALSALDVVPL…FNDEAQKQLA (142 aa). His-114 contributes to the heme b binding site.

The protein belongs to the globin family.

The protein localises to the secreted. It localises to the extracellular space. May be a globin and may play a role in oxygen transport. This chain is Globin-like host-protective antigen, found in Trichostrongylus colubriformis (Black scour worm).